Consider the following 449-residue polypeptide: Exodeoxyribonuclease 7 large subunit (449 aa).

Belongs to the XseA family. In terms of assembly, heterooligomer composed of large and small subunits.

The protein resides in the cytoplasm. The catalysed reaction is Exonucleolytic cleavage in either 5'- to 3'- or 3'- to 5'-direction to yield nucleoside 5'-phosphates.. Its function is as follows. Bidirectionally degrades single-stranded DNA into large acid-insoluble oligonucleotides, which are then degraded further into small acid-soluble oligonucleotides. The protein is Exodeoxyribonuclease 7 large subunit of Aliivibrio fischeri (strain ATCC 700601 / ES114) (Vibrio fischeri).